A 574-amino-acid chain; its full sequence is MPTGTIILIVSIVIILIIAYVACLIVRKRNDNLLVALEERKEELFNLPVNEEVETVKALHLIGQSQVSFREWNQKWVDLSLNSFADIENHIFEAEGYNNAFRFVSAKNAIDSIDSQIDLIEEDIASIRQGLMELKEQEEKNSGRVKHALNLFDSLQEAVRENPDSYGETLSELEKQLKNIEVEFSEFVMLNSSGDPIEASEILDKTEEHMIALNQIMDRIPSLIERVTKDFPEQLEDLESGYRKLVEQNYLFTEANIESQFQNIRVSIRENTALIVSFDLDAAEAENEGIQAKIDHLYKVFNREIEANKEAVKISKNLPKFLEHVVQNTQLLDEESQRLNATYLLADSKLSRINQLKARLESIEIVVTESVEDIENPQVAYSILEERLDHSLASLKEIEEEQLVLADYLKSQELSENTARKKATLYINKLHTLKRYMEKRNLPGIPAEFLTNFFRTSDHVEALIAELDYKRINIEVVNRMLENATYDMNQLEELAYLIVQNATLTEQLLQYSNRYRSFDESVQKAFNRSLSIFEKDFDYQAAFEEISFALETVEPGVTERFVRSYEKTREAIRY.

Over 1 to 7 (MPTGTII) the chain is Extracellular. The helical transmembrane segment at 8–26 (LIVSIVIILIIAYVACLIV) threads the bilayer. Residues 27–574 (RKRNDNLLVA…YEKTREAIRY (548 aa)) are Cytoplasmic-facing. Residues 105–189 (SAKNAIDSID…IEVEFSEFVM (85 aa)) are a coiled coil.

The protein belongs to the EzrA family.

Its subcellular location is the cell membrane. Negative regulator of FtsZ ring formation; modulates the frequency and position of FtsZ ring formation. Inhibits FtsZ ring formation at polar sites. Interacts either with FtsZ or with one of its binding partners to promote depolymerization. This is Septation ring formation regulator EzrA from Streptococcus suis (strain 98HAH33).